The sequence spans 272 residues: NADPH-dependent aldehyde reductase 2, chloroplastic (272 aa).

A chloroplast-targeting transit peptide spans 1 to 53; sequence MAAASSVSSPPLCLAGRVAIVTGSSRGIGRAIAIHLAELGARVVVNYSTSPVE. NADP(+) is bound at residue 26–50; sequence RGIGRAIAIHLAELGARVVVNYSTS. S165 provides a ligand contact to substrate. Residue Y179 is the Proton acceptor of the active site.

The protein belongs to the short-chain dehydrogenases/reductases (SDR) family.

It is found in the plastid. It localises to the chloroplast. Functionally, aldehyde reductase that catalyzes the reduction of the aldehyde carbonyl groups on saturated and alpha,beta-unsaturated aldehydes with more than 5 carbons. No activity on alpha,beta-unsaturated ketones. Can use propionaldehyde, butyraldehyde, methylglyoxal, (e)-2-pentenal, (E)-2-hexenal, (Z)-3-hexenal and (E)-2-nonenal as substrates, but not propenal (acrolein), crotonaldehyde, 2-butanone, 3-buten-2-one or 1-penten-3-one. This Arabidopsis thaliana (Mouse-ear cress) protein is NADPH-dependent aldehyde reductase 2, chloroplastic.